A 196-amino-acid polypeptide reads, in one-letter code: Elongation factor Ts (196 aa).

The involved in Mg(2+) ion dislocation from EF-Tu stretch occupies residues 80 to 83 (TDFV).

The protein belongs to the EF-Ts family.

It is found in the cytoplasm. Its function is as follows. Associates with the EF-Tu.GDP complex and induces the exchange of GDP to GTP. It remains bound to the aminoacyl-tRNA.EF-Tu.GTP complex up to the GTP hydrolysis stage on the ribosome. The protein is Elongation factor Ts of Thermosipho melanesiensis (strain DSM 12029 / CIP 104789 / BI429).